We begin with the raw amino-acid sequence, 550 residues long: Arginine--tRNA ligase (550 aa).

The 'HIGH' region signature appears at 130–140 (ANPTGPIHIGG).

This sequence belongs to the class-I aminoacyl-tRNA synthetase family. As to quaternary structure, monomer.

Its subcellular location is the cytoplasm. The enzyme catalyses tRNA(Arg) + L-arginine + ATP = L-arginyl-tRNA(Arg) + AMP + diphosphate. The protein is Arginine--tRNA ligase of Mycobacterium sp. (strain JLS).